We begin with the raw amino-acid sequence, 212 residues long: Imidazole glycerol phosphate synthase subunit HisH 2 (212 aa).

Residues 3–212 (RVAIIDYGIN…LMSNFLQWNP (210 aa)) form the Glutamine amidotransferase type-1 domain. Cys82 (nucleophile) is an active-site residue. Catalysis depends on residues His192 and Glu194.

As to quaternary structure, heterodimer of HisH and HisF.

It localises to the cytoplasm. The catalysed reaction is 5-[(5-phospho-1-deoxy-D-ribulos-1-ylimino)methylamino]-1-(5-phospho-beta-D-ribosyl)imidazole-4-carboxamide + L-glutamine = D-erythro-1-(imidazol-4-yl)glycerol 3-phosphate + 5-amino-1-(5-phospho-beta-D-ribosyl)imidazole-4-carboxamide + L-glutamate + H(+). It catalyses the reaction L-glutamine + H2O = L-glutamate + NH4(+). It functions in the pathway amino-acid biosynthesis; L-histidine biosynthesis; L-histidine from 5-phospho-alpha-D-ribose 1-diphosphate: step 5/9. Its function is as follows. IGPS catalyzes the conversion of PRFAR and glutamine to IGP, AICAR and glutamate. The HisH subunit provides the glutamine amidotransferase activity that produces the ammonia necessary to HisF for the synthesis of IGP and AICAR. The protein is Imidazole glycerol phosphate synthase subunit HisH 2 of Nitrobacter winogradskyi (strain ATCC 25391 / DSM 10237 / CIP 104748 / NCIMB 11846 / Nb-255).